A 437-amino-acid polypeptide reads, in one-letter code: U1 small nuclear ribonucleoprotein 70 kDa (437 aa).

Threonine 2 carries the N-acetylthreonine modification. Residues 48–79 (FEDPRDAPPPTRAETREERMERKRREKIERRQ) are disordered. Residues 60-79 (AETREERMERKRREKIERRQ) show a composition bias toward basic and acidic residues. Residues 92 to 202 (HNDPNAQGDA…GGGLGGTRRG (111 aa)) form a required for interaction with U1 RNA region. In terms of domain architecture, RRM spans 103–181 (KTLFVARVNY…RRVLVDVERG (79 aa)). Lysine 118 is subject to N6-acetyllysine. A Phosphotyrosine modification is found at tyrosine 126. The tract at residues 187–437 (WRPRRLGGGL…NGYLMEAAPE (251 aa)) is disordered. Gly residues predominate over residues 192 to 201 (LGGGLGGTRR). Residues 207-254 (NIRHSGRDDTSRYDERPGPSPLPHRDRDRDRERERRERSRERDKERER) are compositionally biased toward basic and acidic residues. Serine 226 and serine 268 each carry phosphoserine. Positions 255–268 (RRSRSRDRRRRSRS) are enriched in basic residues. 2 stretches are compositionally biased toward basic and acidic residues: residues 269–286 (RDKEERRRSRERSKDKDR) and 294–310 (RSRERARRERERKEELR). Residue serine 320 is modified to Phosphoserine. The span at 343-393 (PEEKGRDRDRERRRSHRSERERRRDRDRDRDRDREHKRGERGSERGRDEAR) shows a compositional bias: basic and acidic residues. Residue lysine 346 forms a Glycyl lysine isopeptide (Lys-Gly) (interchain with G-Cter in SUMO2) linkage. Serine 410 bears the Phosphoserine mark.

In terms of assembly, component of the U1 snRNP. The U1 snRNP is composed of the U1 snRNA and the 7 core Sm proteins SNRPB, SNRPD1, SNRPD2, SNRPD3, SNRPE, SNRPF and SNRPG that assemble in a heptameric protein ring on the Sm site of the small nuclear RNA to form the core snRNP, and at least three U1 snRNP-specific proteins SNRNP70/U1-70K, SNRPA/U1-A and SNRPC/U1-C. Interacts with SCNM1. Found in a pre-mRNA splicing complex with SFRS4, SFRS5, SNRNP70, SNRPA1, SRRM1 and SRRM2. Found in a pre-mRNA exonic splicing enhancer (ESE) complex with SNRNP70, SNRPA1, SRRM1 and TRA2B/SFRS10. Interacts with dephosphorylated SFRS13A and SFPQ. Interacts with NUDT21/CPSF5, CPSF6, SCAF11, and ZRANB2. Interacts with GEMIN5. Interacts with FUS. Post-translationally, the N-terminus is blocked. Extensively phosphorylated on serine residues in the C-terminal region.

The protein resides in the nucleus speckle. It localises to the nucleus. Its subcellular location is the nucleoplasm. Functionally, component of the spliceosomal U1 snRNP, which is essential for recognition of the pre-mRNA 5' splice-site and the subsequent assembly of the spliceosome. SNRNP70 binds to the loop I region of U1-snRNA. Truncated isoforms that lack the RRM domain cannot bind U1-snRNA. This chain is U1 small nuclear ribonucleoprotein 70 kDa (SNRNP70), found in Homo sapiens (Human).